Consider the following 766-residue polypeptide: Protein translocase subunit SecA 2 (766 aa).

ATP contacts are provided by residues Gln-84, 102-106 (GEGKT), and Asp-490.

Belongs to the SecA family. In terms of assembly, monomer and homodimer. Part of the essential Sec protein translocation apparatus which comprises SecA, SecYEG and auxiliary proteins SecDF. Other proteins may also be involved.

The protein resides in the cell membrane. The protein localises to the cytoplasm. The catalysed reaction is ATP + H2O + cellular proteinSide 1 = ADP + phosphate + cellular proteinSide 2.. In terms of biological role, part of the Sec protein translocase complex. Interacts with the SecYEG preprotein conducting channel. Has a central role in coupling the hydrolysis of ATP to the transfer of proteins into and across the cell membrane, serving as an ATP-driven molecular motor driving the stepwise translocation of polypeptide chains across the membrane. This chain is Protein translocase subunit SecA 2, found in Thermobifida fusca (strain YX).